The primary structure comprises 41 residues: Sucrose porin (41 aa).

Positions 1-22 are cleaved as a signal peptide; sequence MYRKSTLAMLIALLTSAASAHA.

It belongs to the porin LamB (TC 1.B.3) family. Homotrimer.

The protein localises to the cell outer membrane. Porin for sucrose uptake. This chain is Sucrose porin (scrY), found in Salmonella thompson.